Here is a 497-residue protein sequence, read N- to C-terminus: Malonate-semialdehyde dehydrogenase (497 aa).

The NAD(+) site is built by Phe148, Lys172, Glu175, Arg176, and Ser225. The active-site Nucleophile is the Cys280. Glu382 is a binding site for NAD(+).

This sequence belongs to the aldehyde dehydrogenase family.

It carries out the reaction 3-oxopropanoate + NAD(+) + CoA + H2O = hydrogencarbonate + acetyl-CoA + NADH + H(+). Functionally, involved in the degradation of beta-alanine. Likely catalyzes the NAD(+)- and CoA-dependent oxidative decarboxylation of malonate semialdehyde (3-oxopropanoate) to acetyl-CoA. The chain is Malonate-semialdehyde dehydrogenase from Pseudomonas aeruginosa (strain ATCC 15692 / DSM 22644 / CIP 104116 / JCM 14847 / LMG 12228 / 1C / PRS 101 / PAO1).